We begin with the raw amino-acid sequence, 474 residues long: Tumor necrosis factor receptor superfamily member 1B (474 aa).

Positions 1–22 (MAPAALWVALVFELQLWATGHT) are cleaved as a signal peptide. The Extracellular segment spans residues 23 to 258 (VPAQVVLTPY…PIIEQSTKGG (236 aa)). A glycan (O-linked (GalNAc...) threonine) is linked at T30. TNFR-Cys repeat units follow at residues 39–77 (ECQI…TVCA), 78–119 (DCEA…NRVC), 120–164 (ACEA…VLCK), and 165–203 (ACAP…AVCA). 10 disulfides stabilise this stretch: C40–C54, C55–C68, C58–C76, C79–C94, C97–C111, C101–C119, C121–C127, C136–C145, C139–C163, and C166–C181. N-linked (GlcNAc...) asparagine glycosylation occurs at N69. N-linked (GlcNAc...) asparagine glycosylation is present at N195. Residues T208 and T224 are each glycosylated (O-linked (GalNAc...) threonine). A disordered region spans residues 220–243 (QPEPTRSQPLDQEPGPSQTPSILT). Residues 259 to 288 (ISLPIGLIVGVTSLGLLMLGLVNCIILVQR) traverse the membrane as a helical segment. Over 289-474 (KKKPSCLQRD…WFDQIAVKVA (186 aa)) the chain is Cytoplasmic. Disordered stretches follow at residues 295-314 (LQRD…DAVG), 321-378 (LTTA…GSHG), and 397-463 (SQCS…PSQA). A compositionally biased stretch (basic and acidic residues) spans 297–310 (RDAKVPHVPDEKSQ). 2 stretches are compositionally biased toward low complexity: residues 324-338 (APSS…SASA) and 363-378 (ARAS…GSHG). A Phosphoserine modification is found at S331. Residues 429 to 442 (ECPSQSPCETTETL) are compositionally biased toward polar residues.

Binds to TRAF2. Interacts with BMX. Interacts (activated form) with XPNPEP3.

It localises to the membrane. In terms of biological role, receptor with high affinity for TNFSF2/TNF-alpha and approximately 5-fold lower affinity for homotrimeric TNFSF1/lymphotoxin-alpha. The TRAF1/TRAF2 complex recruits the apoptotic suppressors BIRC2 and BIRC3 to TNFRSF1B/TNFR2. In Mus musculus (Mouse), this protein is Tumor necrosis factor receptor superfamily member 1B (Tnfrsf1b).